An 835-amino-acid chain; its full sequence is Replication origin-binding protein (835 aa).

Residues 54-215 (PGMSQTRPVT…SGLRGDENIH (162 aa)) enclose the Helicase ATP-binding domain. 67–74 (APMGSGKT) contributes to the ATP binding site.

This sequence belongs to the herpesviridae OriBP family. As to quaternary structure, homodimer. Interacts with the major DNA-binding protein. Interacts with the helicase/primase component 52 and the polymerase accessory protein.

Its subcellular location is the host nucleus. Functions as a docking protein to recruit essential components of the viral replication machinery to viral DNA origins. In the presence of the major DNA-binding protein, opens dsDNA leading to a conformational change in the origin that facilitates DNA unwinding and subsequent replication. In Homo sapiens (Human), this protein is Replication origin-binding protein.